The primary structure comprises 435 residues: Nucleosome assembly protein 1 (435 aa).

The disordered stretch occupies residues 1–51; that stretch reads MTEQPINTKKKNGDISKAPTPQNTPASVTNSYMRSKPPTVSTIQESNNEDG. Serine 16 carries the phosphoserine modification. The segment covering 19–50 has biased composition (polar residues); sequence PTPQNTPASVTNSYMRSKPPTVSTIQESNNED. Phosphothreonine is present on residues threonine 20 and threonine 24. Serine 27 is subject to Phosphoserine. Threonine 29 carries the phosphothreonine modification. Serine 31 and serine 35 each carry phosphoserine. Threonine 42 carries the phosphothreonine modification. Serine 46 is modified (phosphoserine). Threonine 52 carries the post-translational modification Phosphothreonine. Acidic residues-rich tracts occupy residues 146 to 185 and 338 to 355; these read PTVEEIEEGQQLEEEEKGIDKEDGEEEEEEEEDDEEEDEQ and EANDDDEGEEGDEEDEEL. Disordered stretches follow at residues 146-187 and 308-435; these read PTVE…EQGI and ESFF…CKQQ. The span at 356–374 shows a compositional bias: basic and acidic residues; sequence EARLELDYQLGEEIKDRLI. Acidic residues predominate over residues 386–421; it reads VDFDYPELEGEGDEDEYSDEDGEGDSDDDDDDDDEA.

The protein belongs to the nucleosome assembly protein (NAP) family. As to quaternary structure, component of the GIN4 complex which forms a ring at the bud neck. Post-translationally, phosphorylation is cell cycle dependent and is important for its bud neck localization. Phosphorylation is highest in newly collected G1 cells, declines when the cells are traversing through the G1 phase, and reaches the lowest level around the time of bud emergence. Phosphorylation increases and remains high through the rest of the cell cycle until the beginning of the next one, when it decreases again. Phosphorylation involves two septin ring-associated kinases, CLA4 and GIN4, and its dephosphorylation occurs at the septin ring in a manner dependent on the phosphatases PP2A and CDC14.

It is found in the bud neck. Its subcellular location is the bud tip. Functionally, acidic protein, which assembles histones into an octamer. Involved in the regulation of the localization and the function of the septins during mitosis. This chain is Nucleosome assembly protein 1 (NAP1), found in Candida albicans (strain SC5314 / ATCC MYA-2876) (Yeast).